A 267-amino-acid chain; its full sequence is MSDILDKIVATKKIEVAHNSSKISLGNHREQAEANNQSNLLKPRGFIQAIERKISAGKAGVITEVKKASPSKGILRENFISAEIAQSYEKHGAACLSVLTDSDYFQGCNAYLQEARAACQIPVLRKDFTIDPYQIYEARAIGADAILLIVACLELNQMMELEACAHELGLDVLVEVHNAPELEQALELKTPLLGINNRNLKTFEVSLQTTLSLLSSVPKNKTLVTESGILSRADVELMRKNQINAFLVGEAFMRAPDPGTALSELFA.

It belongs to the TrpC family.

It carries out the reaction 1-(2-carboxyphenylamino)-1-deoxy-D-ribulose 5-phosphate + H(+) = (1S,2R)-1-C-(indol-3-yl)glycerol 3-phosphate + CO2 + H2O. The protein operates within amino-acid biosynthesis; L-tryptophan biosynthesis; L-tryptophan from chorismate: step 4/5. This Polynucleobacter asymbioticus (strain DSM 18221 / CIP 109841 / QLW-P1DMWA-1) (Polynucleobacter necessarius subsp. asymbioticus) protein is Indole-3-glycerol phosphate synthase.